Here is a 394-residue protein sequence, read N- to C-terminus: Xylose isomerase (394 aa).

Catalysis depends on residues His-54 and Asp-57. The Mg(2+) site is built by Glu-180, Glu-216, His-219, Asp-244, Asp-254, Asp-256, and Asp-285. Positions 370 to 394 (VRTPRPAGDGPPAGRARLTVAPRKR) are disordered. Positions 373 to 386 (PRPAGDGPPAGRAR) are enriched in low complexity.

It belongs to the xylose isomerase family. As to quaternary structure, homotetramer. Mg(2+) is required as a cofactor.

The protein localises to the cytoplasm. It catalyses the reaction alpha-D-xylose = alpha-D-xylulofuranose. Its function is as follows. Involved in D-xylose catabolism. This chain is Xylose isomerase (xylA), found in Streptomyces rochei (Streptomyces parvullus).